Consider the following 538-residue polypeptide: Putative cysteine ligase BshC (538 aa).

Positions 248 to 268 (ISKYKEVQEGLRNQQEVIKEL) form a coiled coil.

The protein belongs to the BshC family.

Involved in bacillithiol (BSH) biosynthesis. May catalyze the last step of the pathway, the addition of cysteine to glucosamine malate (GlcN-Mal) to generate BSH. The protein is Putative cysteine ligase BshC of Bacillus cereus (strain B4264).